A 251-amino-acid polypeptide reads, in one-letter code: DNA repair protein RecO (251 aa).

This sequence belongs to the RecO family.

Functionally, involved in DNA repair and RecF pathway recombination. This chain is DNA repair protein RecO, found in Acetivibrio thermocellus (strain ATCC 27405 / DSM 1237 / JCM 9322 / NBRC 103400 / NCIMB 10682 / NRRL B-4536 / VPI 7372) (Clostridium thermocellum).